Reading from the N-terminus, the 162-residue chain is uncharacterized protein (162 aa).

The interval 1–49 (MNSRTASARGWFSSRPPTSESDLEPATDGPASETTTLSPEATTFNDTRI) is disordered. The span at 32–46 (SETTTLSPEATTFND) shows a compositional bias: polar residues. Residues 62 to 82 (MLLSFGIITVIGLAVALVLYI) traverse the membrane as a helical segment.

It localises to the membrane. This is an uncharacterized protein from Homo sapiens (Human).